A 409-amino-acid polypeptide reads, in one-letter code: CUB domain-containing protein (409 aa).

The signal sequence occupies residues 1–18 (MFLFSLTVLSALVLITES). Over residues 154 to 229 (TEASTTAQET…TTAPTTAPAP (76 aa)) the composition is skewed to low complexity. The tract at residues 154–230 (TEASTTAQET…TAPTTAPAPI (77 aa)) is disordered. Residues C232 and C257 are joined by a disulfide bond. Positions 232-338 (CGGVLRGRGT…QEYVDYYYYD (107 aa)) constitute a CUB domain. Residues 389–409 (VQGAADSESEASASSESSDED) form a disordered region. The segment covering 392–409 (AADSESEASASSESSDED) has biased composition (low complexity).

Component of the acid-insoluble and acid-soluble organic matrix of the aragonitic skeleton (at protein level).

It is found in the secreted. The sequence is that of CUB domain-containing protein from Acropora millepora (Staghorn coral).